Here is a 204-residue protein sequence, read N- to C-terminus: Large ribosomal subunit protein uL4 (204 aa).

A disordered region spans residues 47–69 (KAQKTRAEVSGGGKKPWRQKGTG).

Belongs to the universal ribosomal protein uL4 family. As to quaternary structure, part of the 50S ribosomal subunit.

In terms of biological role, one of the primary rRNA binding proteins, this protein initially binds near the 5'-end of the 23S rRNA. It is important during the early stages of 50S assembly. It makes multiple contacts with different domains of the 23S rRNA in the assembled 50S subunit and ribosome. Forms part of the polypeptide exit tunnel. In Cellvibrio japonicus (strain Ueda107) (Pseudomonas fluorescens subsp. cellulosa), this protein is Large ribosomal subunit protein uL4.